A 377-amino-acid polypeptide reads, in one-letter code: Phosphatidylserine decarboxylase proenzyme, mitochondrial (377 aa).

The N-terminal 34 residues, 1 to 34 (MMPLFNVLRSARMLPAVSKKVVSPPMMLRSVREL), are a transit peptide targeting the mitochondrion. Over 35-61 (TNQSKNVYATKEVIIGASQKKKRSWVK) the chain is Mitochondrial matrix. Residues 62 to 80 (WLSVSTLIIGGASYVGYLF) form a helical membrane-spanning segment. Topologically, residues 81–377 (TPDWREIVDS…YGQSLVADGV (297 aa)) are mitochondrial intermembrane. Residues D181, H238, and S344 each act as charge relay system; for autoendoproteolytic cleavage activity in the active site. The Schiff-base intermediate with substrate; via pyruvic acid; for decarboxylase activity role is filled by S344. S344 is subject to Pyruvic acid (Ser); by autocatalysis.

This sequence belongs to the phosphatidylserine decarboxylase family. PSD-B subfamily. Eukaryotic type I sub-subfamily. Heterodimer of a large membrane-associated beta subunit and a small pyruvoyl-containing alpha subunit. The cofactor is pyruvate. Is synthesized initially as an inactive proenzyme. Formation of the active enzyme involves a self-maturation process in which the active site pyruvoyl group is generated from an internal serine residue via an autocatalytic post-translational modification. Two non-identical subunits are generated from the proenzyme in this reaction, and the pyruvate is formed at the N-terminus of the alpha chain, which is derived from the carboxyl end of the proenzyme. The autoendoproteolytic cleavage occurs by a canonical serine protease mechanism, in which the side chain hydroxyl group of the serine supplies its oxygen atom to form the C-terminus of the beta chain, while the remainder of the serine residue undergoes an oxidative deamination to produce ammonia and the pyruvoyl prosthetic group on the alpha chain. During this reaction, the Ser that is part of the protease active site of the proenzyme becomes the pyruvoyl prosthetic group, which constitutes an essential element of the active site of the mature decarboxylase.

Its subcellular location is the mitochondrion inner membrane. It carries out the reaction a 1,2-diacyl-sn-glycero-3-phospho-L-serine + H(+) = a 1,2-diacyl-sn-glycero-3-phosphoethanolamine + CO2. It functions in the pathway phospholipid metabolism; phosphatidylethanolamine biosynthesis; phosphatidylethanolamine from CDP-diacylglycerol: step 2/2. Functionally, catalyzes the formation of phosphatidylethanolamine (PtdEtn) from phosphatidylserine (PtdSer). Plays a central role in phospholipid metabolism and in the interorganelle trafficking of phosphatidylserine. This is Phosphatidylserine decarboxylase proenzyme, mitochondrial from Caenorhabditis elegans.